The sequence spans 1399 residues: DNA-directed RNA polymerase subunit beta' (1399 aa).

Positions 70, 72, 85, and 88 each coordinate Zn(2+). Residues Asp-460, Asp-462, and Asp-464 each contribute to the Mg(2+) site. Residues Cys-814, Cys-888, Cys-895, and Cys-898 each contribute to the Zn(2+) site.

It belongs to the RNA polymerase beta' chain family. The RNAP catalytic core consists of 2 alpha, 1 beta, 1 beta' and 1 omega subunit. When a sigma factor is associated with the core the holoenzyme is formed, which can initiate transcription. Mg(2+) is required as a cofactor. It depends on Zn(2+) as a cofactor.

It carries out the reaction RNA(n) + a ribonucleoside 5'-triphosphate = RNA(n+1) + diphosphate. In terms of biological role, DNA-dependent RNA polymerase catalyzes the transcription of DNA into RNA using the four ribonucleoside triphosphates as substrates. The sequence is that of DNA-directed RNA polymerase subunit beta' from Stutzerimonas stutzeri (strain A1501) (Pseudomonas stutzeri).